A 464-amino-acid polypeptide reads, in one-letter code: Heterogeneous nuclear ribonucleoprotein K (464 aa).

N-acetylmethionine is present on methionine 1. Residues 1–37 (METEQPEETFPNTETNGEFGKRPAEDMEEEQAFKRSR) are disordered. Positions 1–276 (METEQPEETF…GRGGRPMPPS (276 aa)) are necessary for interaction with DDX1. Basic and acidic residues predominate over residues 19–37 (FGKRPAEDMEEEQAFKRSR). Position 34 is an N6-acetyllysine; alternate (lysine 34). Residue lysine 34 forms a Glycyl lysine isopeptide (Lys-Gly) (interchain with G-Cter in SUMO1); alternate linkage. A Glycyl lysine isopeptide (Lys-Gly) (interchain with G-Cter in SUMO2); alternate cross-link involves residue lysine 34. Serine 36 bears the Phosphoserine mark. Threonine 39 bears the Phosphothreonine mark. The 63-residue stretch at 42–104 (MVELRILLQS…ETIGEILKKI (63 aa)) folds into the KH 1 domain. Residues lysine 52 and lysine 60 each participate in a glycyl lysine isopeptide (Lys-Gly) (interchain with G-Cter in SUMO2) cross-link. Tandem repeats lie at residues 54 to 76 (AGAVIGKGGKNIKALRTDYNASV) and 59 to 62 (GKGG). A 2 X 22 AA approximate repeats region spans residues 54–421 (AGAVIGKGGK…QIRHESGASI (368 aa)). The 5 X 4 AA repeats of G-X-G-G stretch occupies residues 59–407 (GKGGKNIKAL…LAGSIIGKGG (349 aa)). Serine 75 and serine 116 each carry phosphoserine. In terms of domain architecture, KH 2 spans 144-209 (DCELRLLIHQ…DRVVECIKII (66 aa)). Lysine 163 is covalently cross-linked (Glycyl lysine isopeptide (Lys-Gly) (interchain with G-Cter in SUMO1); alternate). A Glycyl lysine isopeptide (Lys-Gly) (interchain with G-Cter in SUMO2); alternate cross-link involves residue lysine 163. Lysine 198 bears the N6-acetyllysine mark. Phosphoserine occurs at positions 214 and 216. A Glycyl lysine isopeptide (Lys-Gly) (interchain with G-Cter in SUMO2); alternate cross-link involves residue lysine 219. Position 219 is an N6-succinyllysine; alternate (lysine 219). The tract at residues 236–273 (YGGFTMMFDDRRGRPVGFPMRGRGGFDRMPPGRGGRPM) is RNA-binding RGG-box. 3 consecutive repeat copies span residues 245-250 (DRRGRP), 257-260 (GRGG), and 267-270 (GRGG). Positions 245–329 (DRRGRPVGFP…LMAYDRRGRP (85 aa)) are 2 X 6 AA approximate repeats. The disordered stretch occupies residues 250–329 (PVGFPMRGRG…LMAYDRRGRP (80 aa)). Positions 252–266 (GFPMRGRGGFDRMPP) are enriched in low complexity. The span at 276 to 285 (SRRDYDDMSP) shows a compositional bias: basic and acidic residues. The residue at position 284 (serine 284) is a Phosphoserine. Residues 295-298 (GRGG) form a 3-4 repeat. Omega-N-methylarginine is present on arginine 316. The stretch at 324-329 (DRRGRP) is one 2-2 repeat. Residue arginine 377 is modified to Omega-N-methylarginine. Serine 379 carries the post-translational modification Phosphoserine. Tyrosine 380 is subject to Phosphotyrosine. Residues 387-451 (IITTQVTIPK…DQIQNAQYLL (65 aa)) form the KH 3 domain. A run of 2 repeats spans residues 399 to 421 (AGSIIGKGGQRIKQIRHESGASI) and 404 to 407 (GKGG). N6-acetyllysine; alternate is present on lysine 405. A Glycyl lysine isopeptide (Lys-Gly) (interchain with G-Cter in SUMO2); alternate cross-link involves residue lysine 405. The residue at position 420 (serine 420) is a Phosphoserine. A Glycyl lysine isopeptide (Lys-Gly) (interchain with G-Cter in SUMO1); alternate cross-link involves residue lysine 422. Lysine 422 participates in a covalent cross-link: Glycyl lysine isopeptide (Lys-Gly) (interchain with G-Cter in SUMO2); alternate. Lysine 422 participates in a covalent cross-link: Glycyl lysine isopeptide (Lys-Gly) (interchain with G-Cter in SUMO); alternate.

Identified in the spliceosome C complex. Interacts with ANKRD28, RBM42 and ZIK1. Interacts with DDX1. Interacts with MDM2; this interaction leads to ubiquitination and proteasomal degradation. Interacts with p53/TP53. Interacts with BRDT. Interacts with IVNS1ABP. Interacts with PPIA/CYPA. Part of a transcription inhibitory ribonucleoprotein complex composed at least of the circular RNA circZNF827, ZNF827 and HNRNPL. Post-translationally, sumoylated by CBX4. Sumoylation is increased upon DNA damage, such as that produced by doxorubicin, etoposide, UV light and camptothecin, due to enhanced CBX4 phosphorylation by HIPK2 under these conditions. Ubiquitinated by MDM2. Doxorubicin treatment does not affect monoubiquitination, but slightly decreases HNRNPK poly-ubiquitination. In terms of processing, O-glycosylated (O-GlcNAcylated), in a cell cycle-dependent manner.

It is found in the cytoplasm. Its subcellular location is the nucleus. It localises to the nucleoplasm. The protein localises to the cell projection. The protein resides in the podosome. In terms of biological role, one of the major pre-mRNA-binding proteins. Binds tenaciously to poly(C) sequences. Likely to play a role in the nuclear metabolism of hnRNAs, particularly for pre-mRNAs that contain cytidine-rich sequences. Can also bind poly(C) single-stranded DNA. Plays an important role in p53/TP53 response to DNA damage, acting at the level of both transcription activation and repression. When sumoylated, acts as a transcriptional coactivator of p53/TP53, playing a role in p21/CDKN1A and 14-3-3 sigma/SFN induction. As far as transcription repression is concerned, acts by interacting with long intergenic RNA p21 (lincRNA-p21), a non-coding RNA induced by p53/TP53. This interaction is necessary for the induction of apoptosis, but not cell cycle arrest. As part of a ribonucleoprotein complex composed at least of ZNF827, HNRNPL and the circular RNA circZNF827 that nucleates the complex on chromatin, may negatively regulate the transcription of genes involved in neuronal differentiation. This chain is Heterogeneous nuclear ribonucleoprotein K (HNRNPK), found in Macaca fascicularis (Crab-eating macaque).